The sequence spans 383 residues: Chaperone protein DnaJ (383 aa).

The J domain occupies 5-70; it reads DYYELLGVSR…QKRAAYDRFG (66 aa). The CR-type zinc-finger motif lies at 140–219; it reads GTKTEIRVPT…CSGAGTVPRE (80 aa). Zn(2+) contacts are provided by C153, C156, C171, C174, C193, C196, C207, and C210. CXXCXGXG motif repeat units lie at residues 153–160, 171–178, 193–200, and 207–214; these read CDACSGTG, CPTCGGAG, and CRVCSGAG.

This sequence belongs to the DnaJ family. In terms of assembly, homodimer. Requires Zn(2+) as cofactor.

It is found in the cytoplasm. Participates actively in the response to hyperosmotic and heat shock by preventing the aggregation of stress-denatured proteins and by disaggregating proteins, also in an autonomous, DnaK-independent fashion. Unfolded proteins bind initially to DnaJ; upon interaction with the DnaJ-bound protein, DnaK hydrolyzes its bound ATP, resulting in the formation of a stable complex. GrpE releases ADP from DnaK; ATP binding to DnaK triggers the release of the substrate protein, thus completing the reaction cycle. Several rounds of ATP-dependent interactions between DnaJ, DnaK and GrpE are required for fully efficient folding. Also involved, together with DnaK and GrpE, in the DNA replication of plasmids through activation of initiation proteins. The chain is Chaperone protein DnaJ from Acidiphilium cryptum (strain JF-5).